The primary structure comprises 20 residues: ASGAKGDHGGAGASTXXLLT.

Residues 1–20 (ASGAKGDHGGAGASTXXLLT) form a disordered region.

It belongs to the cytochrome c oxidase subunit 6A family. As to quaternary structure, component of the cytochrome c oxidase (complex IV, CIV), a multisubunit enzyme composed of 14 subunits. The complex is composed of a catalytic core of 3 subunits MT-CO1, MT-CO2 and MT-CO3, encoded in the mitochondrial DNA, and 11 supernumerary subunits COX4I, COX5A, COX5B, COX6A, COX6B, COX6C, COX7A, COX7B, COX7C, COX8 and NDUFA4, which are encoded in the nuclear genome. The complex exists as a monomer or a dimer and forms supercomplexes (SCs) in the inner mitochondrial membrane with NADH-ubiquinone oxidoreductase (complex I, CI) and ubiquinol-cytochrome c oxidoreductase (cytochrome b-c1 complex, complex III, CIII), resulting in different assemblies (supercomplex SCI(1)III(2)IV(1) and megacomplex MCI(2)III(2)IV(2)). In terms of tissue distribution, heart specific isoform.

The protein resides in the mitochondrion inner membrane. Its pathway is energy metabolism; oxidative phosphorylation. In terms of biological role, component of the cytochrome c oxidase, the last enzyme in the mitochondrial electron transport chain which drives oxidative phosphorylation. The respiratory chain contains 3 multisubunit complexes succinate dehydrogenase (complex II, CII), ubiquinol-cytochrome c oxidoreductase (cytochrome b-c1 complex, complex III, CIII) and cytochrome c oxidase (complex IV, CIV), that cooperate to transfer electrons derived from NADH and succinate to molecular oxygen, creating an electrochemical gradient over the inner membrane that drives transmembrane transport and the ATP synthase. Cytochrome c oxidase is the component of the respiratory chain that catalyzes the reduction of oxygen to water. Electrons originating from reduced cytochrome c in the intermembrane space (IMS) are transferred via the dinuclear copper A center (CU(A)) of subunit 2 and heme A of subunit 1 to the active site in subunit 1, a binuclear center (BNC) formed by heme A3 and copper B (CU(B)). The BNC reduces molecular oxygen to 2 water molecules unsing 4 electrons from cytochrome c in the IMS and 4 protons from the mitochondrial matrix. Plays a role in the assembly and stabilization of complex IV. The polypeptide is Cytochrome c oxidase subunit 6A2, mitochondrial (COX6A2) (Canis lupus familiaris (Dog)).